Here is a 131-residue protein sequence, read N- to C-terminus: Large ribosomal subunit protein bL12c (131 aa).

The protein belongs to the bacterial ribosomal protein bL12 family. In terms of assembly, homodimer. Part of the ribosomal stalk of the 50S ribosomal subunit. Forms a multimeric L10(L12)X complex, where L10 forms an elongated spine to which 2 to 4 L12 dimers bind in a sequential fashion. Binds GTP-bound translation factors.

Its subcellular location is the plastid. It is found in the chloroplast. Forms part of the ribosomal stalk which helps the ribosome interact with GTP-bound translation factors. Is thus essential for accurate translation. This chain is Large ribosomal subunit protein bL12c, found in Euglena gracilis.